Consider the following 941-residue polypeptide: Glycine dehydrogenase (decarboxylating) (941 aa).

At Lys692 the chain carries N6-(pyridoxal phosphate)lysine.

This sequence belongs to the GcvP family. The glycine cleavage system is composed of four proteins: P, T, L and H. Pyridoxal 5'-phosphate serves as cofactor.

The enzyme catalyses N(6)-[(R)-lipoyl]-L-lysyl-[glycine-cleavage complex H protein] + glycine + H(+) = N(6)-[(R)-S(8)-aminomethyldihydrolipoyl]-L-lysyl-[glycine-cleavage complex H protein] + CO2. Its function is as follows. The glycine cleavage system catalyzes the degradation of glycine. The P protein binds the alpha-amino group of glycine through its pyridoxal phosphate cofactor; CO(2) is released and the remaining methylamine moiety is then transferred to the lipoamide cofactor of the H protein. The polypeptide is Glycine dehydrogenase (decarboxylating) (Mycobacterium bovis (strain ATCC BAA-935 / AF2122/97)).